The chain runs to 203 residues: MGEEVQIGATAVGIKAKDGVVLAAEKRVSYGFYTLSSAGRKVFVIDDKLAIASAGIIADMQSLARIVKINAKAYELETRKKPTVRSMAKLLSVIMFSRRYMPFFAEVLVGGVDEEGSHLIVMDPLGSLIEDNYAALGTGAKLAISVLDTGYREDITLQDAKKLAVKALKAAIERDPVSGGGIDLVLIDQTGAKEEEVKVQLLI.

Residues 1–9 constitute a propeptide, removed in mature form; by autocatalysis; that stretch reads MGEEVQIGA. The active-site Nucleophile is the threonine 10.

It belongs to the peptidase T1B family. In terms of assembly, the 20S proteasome core is composed of 14 alpha and 14 beta subunits that assemble into four stacked heptameric rings, resulting in a barrel-shaped structure. The two inner rings, each composed of seven catalytic beta subunits, are sandwiched by two outer rings, each composed of seven alpha subunits. The catalytic chamber with the active sites is on the inside of the barrel. Has a gated structure, the ends of the cylinder being occluded by the N-termini of the alpha-subunits. Is capped at one or both ends by the proteasome regulatory ATPase, PAN.

Its subcellular location is the cytoplasm. It carries out the reaction Cleavage of peptide bonds with very broad specificity.. Its activity is regulated as follows. The formation of the proteasomal ATPase PAN-20S proteasome complex, via the docking of the C-termini of PAN into the intersubunit pockets in the alpha-rings, triggers opening of the gate for substrate entry. Interconversion between the open-gate and close-gate conformations leads to a dynamic regulation of the 20S proteasome proteolysis activity. In terms of biological role, component of the proteasome core, a large protease complex with broad specificity involved in protein degradation. This chain is Proteasome subunit beta 2, found in Pyrobaculum arsenaticum (strain DSM 13514 / JCM 11321 / PZ6).